We begin with the raw amino-acid sequence, 462 residues long: EPD1-interacting receptor-like cytoplasmic serine/threonine-protein kinase 5A (462 aa).

One can recognise a Protein kinase domain in the interval 85-366 (FSSANFLGEG…DVVNILEPLL (282 aa)). Residues 91 to 99 (LGEGGFGPV) and lysine 120 contribute to the ATP site. A phosphotyrosine mark is found at tyrosine 165 and tyrosine 167. Aspartate 215 (proton acceptor) is an active-site residue.

Belongs to the protein kinase superfamily. Ser/Thr protein kinase family. As to quaternary structure, interacts with the Verticillium dahliae elicitor EPD1 (AC G2WWH6). In terms of processing, phosphorylated at Tyr-165 and Tyr-167 in the presence of pathogen-associated molecular patterns (PAMPs); this triggers the expression of pathogenesis-related genes (e.g. PR5 and PR16). Mostly expressed in roots and, to a lesser extent, in leaves.

It is found in the cell membrane. The enzyme catalyses L-seryl-[protein] + ATP = O-phospho-L-seryl-[protein] + ADP + H(+). The catalysed reaction is L-threonyl-[protein] + ATP = O-phospho-L-threonyl-[protein] + ADP + H(+). Its function is as follows. Required for pathogen-associated molecular pattern (PAMP, e.g. chitin and flg22)-triggered immunity (PTI) involving reactive oxygen species (ROS) accumulation and triggering plant defense, including defense-related gene expression (e.g. PR1 and LOX). Ensures specific recognition of the EPD1 effector of Verticillium dahliae, resulting in a hypersensitive response known as effector-triggered immunity (ETI), characterized by the activation of programmed cell death to limit infection by the pathogen. Priming plants with the incompatible pathogen V.dahliae leads to an increased resistance to compatible pathogens, as a result of systemic acquired resistance (SAR). The protein is EPD1-interacting receptor-like cytoplasmic serine/threonine-protein kinase 5A of Gossypium barbadense (Sea Island cotton).